Reading from the N-terminus, the 254-residue chain is Small ribosomal subunit protein uS2 (254 aa).

It belongs to the universal ribosomal protein uS2 family.

In Brucella ovis (strain ATCC 25840 / 63/290 / NCTC 10512), this protein is Small ribosomal subunit protein uS2.